Reading from the N-terminus, the 549-residue chain is Cation/acetate symporter ActP (549 aa).

13 helical membrane-spanning segments follow: residues Trp-33–Ala-53, Leu-77–Phe-97, Gly-103–Glu-123, Ile-148–Gly-168, Ile-183–Ala-203, Trp-206–Val-226, Ile-262–Leu-282, Gly-303–Val-323, Leu-355–Leu-375, Val-404–Glu-424, Ile-428–Leu-448, Gly-464–Val-484, and Ile-493–Phe-513.

It belongs to the sodium:solute symporter (SSF) (TC 2.A.21) family.

The protein localises to the cell inner membrane. In terms of biological role, transports acetate. The sequence is that of Cation/acetate symporter ActP from Escherichia coli O8 (strain IAI1).